We begin with the raw amino-acid sequence, 598 residues long: Vacuolin-A (598 aa).

The stretch at 482 to 539 (IKTTEARLKAETDNIALEQRNKAIISESQAKLSSAQREAESLLITAEAQKKASELQGE) forms a coiled coil.

Belongs to the vacuolin family.

The protein localises to the endosome membrane. It localises to the lysosome. This chain is Vacuolin-A (vacA), found in Dictyostelium discoideum (Social amoeba).